The following is a 375-amino-acid chain: 23S rRNA (uracil(747)-C(5))-methyltransferase RlmC (375 aa).

Positions 3, 11, 14, and 87 each coordinate [4Fe-4S] cluster. 4 residues coordinate S-adenosyl-L-methionine: Q212, F241, E262, and N307. The Nucleophile role is filled by C334.

The protein belongs to the class I-like SAM-binding methyltransferase superfamily. RNA M5U methyltransferase family. RlmC subfamily.

It carries out the reaction uridine(747) in 23S rRNA + S-adenosyl-L-methionine = 5-methyluridine(747) in 23S rRNA + S-adenosyl-L-homocysteine + H(+). In terms of biological role, catalyzes the formation of 5-methyl-uridine at position 747 (m5U747) in 23S rRNA. The sequence is that of 23S rRNA (uracil(747)-C(5))-methyltransferase RlmC from Escherichia coli O17:K52:H18 (strain UMN026 / ExPEC).